The sequence spans 85 residues: Small ribosomal subunit protein bS16 (85 aa).

This sequence belongs to the bacterial ribosomal protein bS16 family.

This chain is Small ribosomal subunit protein bS16, found in Buchnera aphidicola subsp. Schizaphis graminum (strain Sg).